A 106-amino-acid polypeptide reads, in one-letter code: Pyrimidine/purine nucleoside phosphorylase (106 aa).

This sequence belongs to the nucleoside phosphorylase PpnP family.

The catalysed reaction is a purine D-ribonucleoside + phosphate = a purine nucleobase + alpha-D-ribose 1-phosphate. It carries out the reaction adenosine + phosphate = alpha-D-ribose 1-phosphate + adenine. It catalyses the reaction cytidine + phosphate = cytosine + alpha-D-ribose 1-phosphate. The enzyme catalyses guanosine + phosphate = alpha-D-ribose 1-phosphate + guanine. The catalysed reaction is inosine + phosphate = alpha-D-ribose 1-phosphate + hypoxanthine. It carries out the reaction thymidine + phosphate = 2-deoxy-alpha-D-ribose 1-phosphate + thymine. It catalyses the reaction uridine + phosphate = alpha-D-ribose 1-phosphate + uracil. The enzyme catalyses xanthosine + phosphate = alpha-D-ribose 1-phosphate + xanthine. Its function is as follows. Catalyzes the phosphorolysis of diverse nucleosides, yielding D-ribose 1-phosphate and the respective free bases. Can use uridine, adenosine, guanosine, cytidine, thymidine, inosine and xanthosine as substrates. Also catalyzes the reverse reactions. In Burkholderia multivorans (strain ATCC 17616 / 249), this protein is Pyrimidine/purine nucleoside phosphorylase.